Reading from the N-terminus, the 350-residue chain is Glycogenin-1 (350 aa).

Threonine 2 carries the post-translational modification N-acetylthreonine. UDP contacts are provided by leucine 9, threonine 11, asparagine 12, and tyrosine 15. Leucine 9, threonine 11, asparagine 12, and tyrosine 15 together coordinate UDP-alpha-D-glucose. Serine 44 carries the post-translational modification Phosphoserine. Residue arginine 77 coordinates UDP. UDP-alpha-D-glucose contacts are provided by arginine 77, lysine 86, aspartate 102, alanine 103, aspartate 104, asparagine 133, serine 134, aspartate 160, aspartate 163, and glutamine 164. UDP is bound by residues aspartate 102, alanine 103, and aspartate 104. Aspartate 102 serves as a coordination point for Mn(2+). Aspartate 104 serves as a coordination point for Mn(2+). Tyrosine 195 is a glycosylation site (O-linked (Glc...) tyrosine). Residues histidine 212, glycine 215, and lysine 218 each contribute to the UDP site. Residue histidine 212 participates in Mn(2+) binding. UDP-alpha-D-glucose is bound by residues glycine 215 and lysine 218. The interaction with GYS1 stretch occupies residues 301–333 (SHLSLGEIPAMAQPFVSSEERKERWEQGQADYM).

The protein belongs to the glycosyltransferase 8 family. Glycogenin subfamily. In terms of assembly, part of the GYS1-GYG1 complex, a heterooctamer composed of a tetramer of GYS1 and 2 dimers of GYG1, where each GYS1 protomer binds to one GYG1 subunit (via GYG1 C-terminus); the GYS1 tetramer may dissociate from GYG1 dimers to continue glycogen polymerization on its own. May also form a heterooctamer complex with GYS2 (via GYG1 C-terminus). Mn(2+) serves as cofactor. Post-translationally, self-glycosylated by the transfer of glucose residues from UDP-glucose to itself, forming an alpha-1,4-glycan of around 10 residues attached to Tyr-195. Phosphorylated. In terms of tissue distribution, highly expressed in skeletal muscle and heart, with lower levels in brain, lung, kidney and pancreas.

Its subcellular location is the cytoplasm. The protein resides in the nucleus. It carries out the reaction L-tyrosyl-[glycogenin] + UDP-alpha-D-glucose = alpha-D-glucosyl-L-tyrosyl-[glycogenin] + UDP + H(+). The catalysed reaction is [1,4-alpha-D-glucosyl](n)-L-tyrosyl-[glycogenin] + UDP-alpha-D-glucose = [1,4-alpha-D-glucosyl](n+1)-L-tyrosyl-[glycogenin] + UDP + H(+). The protein operates within glycan biosynthesis; glycogen biosynthesis. Its activity is regulated as follows. Inhibited by palladium ions. In terms of biological role, glycogenin participates in the glycogen biosynthetic process along with glycogen synthase and glycogen branching enzyme. It catalyzes the formation of a short alpha (1,4)-glucosyl chain covalently attached via a glucose 1-O-tyrosyl linkage to internal tyrosine residues and these chains act as primers for the elongation reaction catalyzed by glycogen synthase. This Homo sapiens (Human) protein is Glycogenin-1.